We begin with the raw amino-acid sequence, 710 residues long: Dendrin (710 aa).

Disordered regions lie at residues 1-22 (MLDGPLFSEGPDSPRELQDEES), 62-195 (WARG…PWGG), 213-274 (AGTA…KRLD), and 324-375 (GLNS…GKEG). The stretch at 103–134 (AEVRAREQEKRKAASQEREAKETERKRRKAGG) forms a coiled coil. Over residues 105–127 (VRAREQEKRKAASQEREAKETER) the composition is skewed to basic and acidic residues. Residues 113-131 (RKAASQEREAKETERKRRK) form a nuclear localization region. The interaction with MAGI2 stretch occupies residues 186 to 236 (GVAWAGPWGGRRPGPPSYEAHLLLRGSAGTAPRRRWDRPPPYVAPPSYEGP). The span at 265 to 274 (EGGRTKKRLD) shows a compositional bias: basic and acidic residues. The tract at residues 341–435 (PGTDAALSRS…LEVWKVTRRA (95 aa)) is interaction with ACTN1. A compositionally biased stretch (basic residues) spans 360-370 (PRSRQHLRGSR). Residue S388 is modified to Phosphoserine. Disordered regions lie at residues 390–422 (KKPPVRHSQTLPRPWAPGGTGWKESLGQREGAE), 469–508 (PRTQQGQLVPSGESCSVSDSLSQPKPCHEEEGEGAAANPS), and 521–710 (NQPS…RERE). The interaction with CD2AP and NPHS1 stretch occupies residues 407 to 708 (GGTGWKESLG…TRKTPQGNRE (302 aa)). Polar residues predominate over residues 469–491 (PRTQQGQLVPSGESCSVSDSLSQ). The span at 693-710 (GFIREDTRKTPQGNRERE) shows a compositional bias: basic and acidic residues.

Forms a ternary complex with MAGI2 and SH3KBP1; recruits DDN to the cytoplasm. Interacts with MAGI1. Interacts with ACTN1 and may interact with WWC1. Interacts with the podocyte slit diaphragm proteins CD2AP, NPHS1 and NPHS2; the interaction with CD2AP and NPHS1 is direct. Two forms of 81 kDa and 89 kDa are expressed in brain. The 81 kDa form is the only one found in kidney podocytes.

The protein resides in the cell projection. It localises to the dendritic spine membrane. Its subcellular location is the cytoplasm. It is found in the endoplasmic reticulum membrane. The protein localises to the perikaryon. The protein resides in the nucleus. In terms of biological role, promotes apoptosis of kidney glomerular podocytes. Podocytes are highly specialized cells essential to the ultrafiltration of blood, resulting in the extraction of urine and the retention of protein. The polypeptide is Dendrin (Ddn) (Mus musculus (Mouse)).